A 131-amino-acid chain; its full sequence is Transcriptional activatory protein CaiF (131 aa).

Its function is as follows. Potential transcriptional activator of carnitine metabolism. The chain is Transcriptional activatory protein CaiF (caiF) from Escherichia coli (strain K12).